The chain runs to 334 residues: GTP 3',8-cyclase (334 aa).

In terms of domain architecture, Radical SAM core spans 11 to 236 (GFNRKIDYLR…ESTESSQGPA (226 aa)). A GTP-binding site is contributed by Arg-20. Residues Cys-27 and Cys-31 each coordinate [4Fe-4S] cluster. Residue Tyr-33 coordinates S-adenosyl-L-methionine. A [4Fe-4S] cluster-binding site is contributed by Cys-34. Position 69 (Arg-69) interacts with GTP. Gly-73 contacts S-adenosyl-L-methionine. Thr-100 contributes to the GTP binding site. Residue Ser-124 participates in S-adenosyl-L-methionine binding. Lys-161 lines the GTP pocket. Met-195 contributes to the S-adenosyl-L-methionine binding site. Residues Cys-260 and Cys-263 each contribute to the [4Fe-4S] cluster site. 265 to 267 (RVR) serves as a coordination point for GTP. Cys-277 serves as a coordination point for [4Fe-4S] cluster.

The protein belongs to the radical SAM superfamily. MoaA family. Monomer and homodimer. Requires [4Fe-4S] cluster as cofactor.

The enzyme catalyses GTP + AH2 + S-adenosyl-L-methionine = (8S)-3',8-cyclo-7,8-dihydroguanosine 5'-triphosphate + 5'-deoxyadenosine + L-methionine + A + H(+). It functions in the pathway cofactor biosynthesis; molybdopterin biosynthesis. In terms of biological role, catalyzes the cyclization of GTP to (8S)-3',8-cyclo-7,8-dihydroguanosine 5'-triphosphate. The protein is GTP 3',8-cyclase of Pseudomonas putida (strain GB-1).